The sequence spans 321 residues: Thymidylate synthase (321 aa).

Positions 1 to 32 are disordered; that stretch reads MVLTPTKDGPDQESMPLPADNGESPSKQQAPV. Phosphoserine is present on residues Ser-24 and Ser-26. Residue Tyr-39 is modified to Phosphotyrosine. Residues Arg-56 and 181–182 contribute to the dUMP site; that span reads RR. The Nucleophile role is filled by Cys-201. A Phosphotyrosine modification is found at Tyr-208. Residue Ser-210 is modified to Phosphoserine. DUMP is bound by residues 223 to 226, Asn-234, and 264 to 266; these read RSAD and HVY. Asp-226 is a binding site for (6R)-5,10-methylene-5,6,7,8-tetrahydrofolate. A (6R)-5,10-methylene-5,6,7,8-tetrahydrofolate-binding site is contributed by Ala-320.

This sequence belongs to the thymidylate synthase family. As to quaternary structure, homodimer.

The enzyme catalyses dUMP + (6R)-5,10-methylene-5,6,7,8-tetrahydrofolate = 7,8-dihydrofolate + dTMP. It participates in pyrimidine metabolism; dTTP biosynthesis. The chain is Thymidylate synthase (Ts) from Drosophila melanogaster (Fruit fly).